Consider the following 600-residue polypeptide: Nisin transport ATP-binding protein NisT (600 aa).

5 helical membrane-spanning segments follow: residues 34–54, 69–89, 147–167, 168–188, and 260–280; these read AIYL…SLFI, LINI…LGQL, AIIV…FIGT, WNIG…VLFL, and IFLD…MILS. The 284-residue stretch at 34-317 folds into the ABC transmembrane type-1 domain; it reads AIYLIVLNAI…MIQNIYIIYN (284 aa). In terms of domain architecture, ABC transporter spans 352 to 592; sequence VKVINLSYVY…CQYYQELYYS (241 aa). 386–393 contributes to the ATP binding site; the sequence is GKNGSGKS.

The protein belongs to the ABC transporter superfamily. Nisin exporter (TC 3.A.1.111.3) family.

The protein resides in the cell membrane. In terms of biological role, probably implicated in the export process of the lantibiotic nisin. This Lactococcus lactis subsp. lactis (Streptococcus lactis) protein is Nisin transport ATP-binding protein NisT (nisT).